The primary structure comprises 668 residues: Major S-layer protein (668 aa).

The first 24 residues, 1 to 24 (MKRFAAVTLAALMLLTVFASAASA), serve as a signal peptide directing secretion. Residues asparagine 36, asparagine 65, asparagine 111, asparagine 265, asparagine 583, asparagine 596, asparagine 602, asparagine 608, asparagine 617, and asparagine 635 are each glycosylated (N-linked (GlcNAc...) asparagine). The tract at residues 584–650 (ETTSITKPDE…ESNGSPGFGV (67 aa)) is disordered. Positions 596–611 (NETVSDNETMPDNTSS) are enriched in polar residues. Positions 631 to 641 (EPTDNETEPDE) are enriched in acidic residues. A helical membrane pass occupies residues 644–664 (GSPGFGVVLGLAGLLGVVYLV).

This sequence belongs to the Methanosarcinales S-layer protein family. In terms of processing, glycosylated.

The protein localises to the secreted. It is found in the cell wall. Its subcellular location is the S-layer. It localises to the cell membrane. S-layer protein. The S-layer is a paracrystalline mono-layered assembly of proteins which coat the surface of the cell. The sequence is that of Major S-layer protein from Methanosarcina barkeri (strain Fusaro / DSM 804).